The sequence spans 376 residues: Putative endoglucanase type K (376 aa).

The signal sequence occupies residues 1-18 (MRSYTLLALAGPLAVSAA). Residues 19-308 (SGSGHSTRYW…ATKPAQPVNK (290 aa)) are catalytic. The active-site Nucleophile is aspartate 29. Residue aspartate 140 is the Proton donor of the active site. A disordered region spans residues 229-332 (AFKGDTSASK…SCPAKTDATA (104 aa)). Composition is skewed to low complexity over residues 235 to 258 (SASKPQPSSSAKKTTSAAAAAQPQ) and 291 to 306 (KPVATKPAATKPAQPV). Positions 309-338 (PKTTQKVRGTKTRGSCPAKTDATAKASVVP) are linker. The region spanning 335-374 (SVVPAYYQCGGSKSAYPNGNLACATGSKCVKQNEYYSQCV) is the CBM1 domain.

Belongs to the glycosyl hydrolase 45 (cellulase K) family.

The catalysed reaction is Endohydrolysis of (1-&gt;4)-beta-D-glucosidic linkages in cellulose, lichenin and cereal beta-D-glucans.. This is Putative endoglucanase type K from Fusarium oxysporum (Fusarium vascular wilt).